The chain runs to 259 residues: Small ribosomal subunit protein uS2 (259 aa).

The protein belongs to the universal ribosomal protein uS2 family.

This chain is Small ribosomal subunit protein uS2, found in Streptococcus pneumoniae serotype 4 (strain ATCC BAA-334 / TIGR4).